The primary structure comprises 76 residues: U10-ctenitoxin-Pn1a (76 aa).

Residues 1–15 form the signal peptide; that stretch reads SFVFYLFTLITVVRA. Residues 16–36 constitute a propeptide that is removed on maturation; that stretch reads EEFILENEAEDIAPAVHGESG. Intrachain disulfides connect Cys-39–Cys-54, Cys-46–Cys-59, Cys-53–Cys-73, and Cys-61–Cys-71.

It belongs to the neurotoxin 02 (plectoxin) family. 09 subfamily. Expressed by the venom gland.

The protein localises to the secreted. In Phoneutria nigriventer (Brazilian armed spider), this protein is U10-ctenitoxin-Pn1a.